The primary structure comprises 185 residues: FK506-binding protein 2 (185 aa).

An N-terminal signal peptide occupies residues 1 to 20; the sequence is MQGLLLSLSLLASAAVGVLA. Residues 41–129 form the PPIase FKBP-type domain; it reads GDKINVHYKG…VFETELVGIE (89 aa). Residues 182 to 185 carry the Prevents secretion from ER motif; the sequence is HNEL.

The protein belongs to the FKBP-type PPIase family. FKBP2 subfamily.

It localises to the endoplasmic reticulum. The catalysed reaction is [protein]-peptidylproline (omega=180) = [protein]-peptidylproline (omega=0). Its activity is regulated as follows. Inhibited by both FK506 and rapamycin. Its function is as follows. PPIases accelerate the folding of proteins. It catalyzes the cis-trans isomerization of proline imidic peptide bonds in oligopeptides. This Podospora anserina (Pleurage anserina) protein is FK506-binding protein 2 (FPR2).